A 374-amino-acid chain; its full sequence is ATPase ASNA1 homolog (374 aa).

Lysine 44–threonine 51 provides a ligand contact to ATP. Aspartate 73 is an active-site residue. Glutamate 244 and asparagine 271 together coordinate ATP.

It belongs to the arsA ATPase family. In terms of assembly, homodimer.

Its subcellular location is the cytoplasm. It is found in the endoplasmic reticulum. Functionally, ATPase required for the post-translational delivery of tail-anchored (TA) proteins to the endoplasmic reticulum. Recognizes and selectively binds the transmembrane domain of TA proteins in the cytosol. This complex then targets to the endoplasmic reticulum by membrane-bound receptors, where the tail-anchored protein is released for insertion. This process is regulated by ATP binding and hydrolysis. ATP binding drives the homodimer towards the closed dimer state, facilitating recognition of newly synthesized TA membrane proteins. ATP hydrolysis is required for insertion. Subsequently, the homodimer reverts towards the open dimer state, lowering its affinity for the membrane-bound receptor, and returning it to the cytosol to initiate a new round of targeting. The sequence is that of ATPase ASNA1 homolog from Plasmodium vivax (strain Salvador I).